Reading from the N-terminus, the 58-residue chain is Large ribosomal subunit protein bL32 (58 aa).

It belongs to the bacterial ribosomal protein bL32 family.

This is Large ribosomal subunit protein bL32 from Anaplasma marginale (strain Florida).